The following is a 256-amino-acid chain: 5'-nucleotidase SurE (256 aa).

Residues Asp8, Asp9, Ser40, and Asn92 each coordinate a divalent metal cation.

Belongs to the SurE nucleotidase family. It depends on a divalent metal cation as a cofactor.

It localises to the cytoplasm. The catalysed reaction is a ribonucleoside 5'-phosphate + H2O = a ribonucleoside + phosphate. Functionally, nucleotidase that shows phosphatase activity on nucleoside 5'-monophosphates. The polypeptide is 5'-nucleotidase SurE (Sinorhizobium fredii (strain NBRC 101917 / NGR234)).